Consider the following 336-residue polypeptide: Tryptophan--tRNA ligase (336 aa).

ATP-binding positions include 16–18 (QPT) and 24–25 (GN). A 'HIGH' region motif is present at residues 17–25 (PTGQLHLGN). Aspartate 140 serves as a coordination point for L-tryptophan. ATP is bound by residues 152–154 (GED), valine 191, and 200–204 (KMSKS). A 'KMSKS' region motif is present at residues 200-204 (KMSKS).

It belongs to the class-I aminoacyl-tRNA synthetase family. In terms of assembly, homodimer.

The protein localises to the cytoplasm. The enzyme catalyses tRNA(Trp) + L-tryptophan + ATP = L-tryptophyl-tRNA(Trp) + AMP + diphosphate + H(+). Its function is as follows. Catalyzes the attachment of tryptophan to tRNA(Trp). The polypeptide is Tryptophan--tRNA ligase (Gloeobacter violaceus (strain ATCC 29082 / PCC 7421)).